Here is a 185-residue protein sequence, read N- to C-terminus: Elongation factor P (185 aa).

The protein belongs to the elongation factor P family.

The protein localises to the cytoplasm. Its pathway is protein biosynthesis; polypeptide chain elongation. Functionally, involved in peptide bond synthesis. Stimulates efficient translation and peptide-bond synthesis on native or reconstituted 70S ribosomes in vitro. Probably functions indirectly by altering the affinity of the ribosome for aminoacyl-tRNA, thus increasing their reactivity as acceptors for peptidyl transferase. This Nitrosomonas europaea (strain ATCC 19718 / CIP 103999 / KCTC 2705 / NBRC 14298) protein is Elongation factor P.